The following is a 136-amino-acid chain: uncharacterized protein (136 aa).

A helical transmembrane segment spans residues 102 to 118; that stretch reads FVIVFFFFSFSLSISCV.

Its subcellular location is the membrane. This is an uncharacterized protein from Saccharomyces cerevisiae (strain ATCC 204508 / S288c) (Baker's yeast).